Consider the following 462-residue polypeptide: Ribosomal oxygenase 2 (462 aa).

The disordered stretch occupies residues 1 to 24 (MPKKARPAGDGKEQGPAPKQVKVE). Positions 139–271 (QPQRFKDELW…SSWGDFLLDT (133 aa)) constitute a JmjC domain. Residues His179, Asp181, and His240 each coordinate Fe cation. The residue at position 308 (Ser308) is a Phosphoserine.

Belongs to the ROX family. MINA53 subfamily. The cofactor is Fe(2+).

It is found in the nucleus. It localises to the nucleolus. The catalysed reaction is L-histidyl-[ribosomal protein uL15] + 2-oxoglutarate + O2 = (3S)-3-hydroxy-L-histidyl-[ribosomal protein uL15] + succinate + CO2. It catalyses the reaction L-histidyl-[protein] + 2-oxoglutarate + O2 = (3S)-3-hydroxy-L-histidyl-[protein] + succinate + CO2. Its function is as follows. Oxygenase that can act as both a histone lysine demethylase and a ribosomal histidine hydroxylase. Is involved in the demethylation of trimethylated 'Lys-9' on histone H3 (H3K9me3), leading to an increase in ribosomal RNA expression. Also catalyzes the hydroxylation of 60S ribosomal protein L27a on 'His-39'. May play an important role in cell growth and survival. May be involved in ribosome biogenesis, most likely during the assembly process of pre-ribosomal particles. The protein is Ribosomal oxygenase 2 (RIOX2) of Bos taurus (Bovine).